A 510-amino-acid polypeptide reads, in one-letter code: ATP synthase subunit alpha (510 aa).

169 to 176 contributes to the ATP binding site; the sequence is GDRQTGKT.

This sequence belongs to the ATPase alpha/beta chains family. As to quaternary structure, F-type ATPases have 2 components, CF(1) - the catalytic core - and CF(0) - the membrane proton channel. CF(1) has five subunits: alpha(3), beta(3), gamma(1), delta(1), epsilon(1). CF(0) has three main subunits: a(1), b(2) and c(9-12). The alpha and beta chains form an alternating ring which encloses part of the gamma chain. CF(1) is attached to CF(0) by a central stalk formed by the gamma and epsilon chains, while a peripheral stalk is formed by the delta and b chains.

It is found in the cell inner membrane. It carries out the reaction ATP + H2O + 4 H(+)(in) = ADP + phosphate + 5 H(+)(out). Produces ATP from ADP in the presence of a proton gradient across the membrane. The alpha chain is a regulatory subunit. This is ATP synthase subunit alpha from Anaeromyxobacter dehalogenans (strain 2CP-C).